We begin with the raw amino-acid sequence, 1407 residues long: MASSSPMFNDHAIARSKYALNSVLQQTNELHDGNGGGGYTPSSPHLGGVSLNKSQNQPYTQYNNGGGGGGGGGGHINPMHLNLNSITNNHNNHHNHHPNTLSTPHNNNHNNNNHSTSHHPHSNSVANGGHLSQSITQQRGGLADLANAVINRKNRSDSVQTKMKPTDSASNIESWAKVEKFSSSIFDSEKSKKSNIFQKYTLRLKNSYEKGYLHQHYNSQIMLLRITNLIGIVAVSYGFTKEAIFMLIAIRILCFNLFAFSIFLSFLRNRELYKKLFHPLFLFSFTTFFITILLEYKTTTTTLILFLYVVIFCCLYALGCLLFIWMVMCNLMNAICFIIFIFLESTLDRNNLISFVIYILTMFLVGASHLYVLEKFRKESFIAEKKLIKESNILKNEKEKSSKLLNNILPDFIIENIVYDFEKRDIVIPEPEEYKSCSILCFDIVQFTNMSAKLDSPSRLVDLLTQVFREFDTVVLRNGCQKIKTDGDAYICACGLKSKKKAKKQMPNSKSTPLLQSTSSTSVNNIDLDKDNKDNNNNNNNNKNSNNNFKNKNNIINNNNNSNSNNNNNNNSNNNNINNSGNDDDDEEIEDSELEHFEKLIDVAIEIMNLDVLKETGNTEGIQVQFRCGIAAGSVYGGVIGSQKYQFDIWGDTIARSHTLEQLGQPGKVHVGETIMTHKNWLKKWQYNYNIVSNSECKDQEHDYEFHKAHGECITSYFVDWKDDYREKKKKDLSCDFSINKVLNAETIESKSNNNNYNNNNYNNNNYNNNYNNNNLNNNSNNNNNEYGSSSSSSSVLGEAVTEQIDCNNTNPPLQHKKSQSILTNNENDIVSPSLTSNSPILDTTVNNNNNNNNTNNNNKNQNNIYGNNNNNEEDFKIKSKSNSSFEIEMSNIKKPKSRFIDRVMGILHHVKISNDKIDKEIIQIDEDFVKVTKLRKYFLFFENLTTEKFFHKYVIINNVVETKFFLVIGLILHLMFYLDDHIMDSAPYFNSNVIYLVMGIAFLVYIGLSFTRIFRTPLVYQIAFFILLCAFGVCTVLELIRFQNPLARSSLTRVCATLFYLNVFHSLNFLSVLFLNLFIFSFFIICSILISPTLTNHLYETDYIGFVIVLLIQICSSYGMKLAMRKAWVVNCKINFKTISVNKEKDKFNFLLKSIFPQSALTKLRDMIDTPNIETKGIVYVQPHQDVSIMFIQIAGFQEYDEPKDLIKKLNDIFSFFDGLLNQKYGGTVEKIKTIGNTYMAVSGLDGSPSFLEKMSDFALDVKAYTNSVAISRVVRIGISHGPLVAGCIGISRAKFDVWGDTANTASRMQSNAQDNEIMVTHSVYERLNKLFYFDDEKEILVKGKGKMVTHVLKGKKDLEQTNKWFTKPPEVWEVNATPAGIASPLSGTLLGEIGSFTTPRFHLSS.

Over 1 to 219 the chain is Cytoplasmic; that stretch reads MASSSPMFND…KGYLHQHYNS (219 aa). The segment at 28-131 is disordered; it reads NELHDGNGGG…SNSVANGGHL (104 aa). The span at 51–63 shows a compositional bias: polar residues; that stretch reads LNKSQNQPYTQYN. Over residues 64-75 the composition is skewed to gly residues; sequence NGGGGGGGGGGH. Low complexity-rich tracts occupy residues 80–90 and 98–115; these read HLNLNSITNNH and PNTL…NNHS. Helical transmembrane passes span 220 to 240, 244 to 264, 276 to 296, 304 to 324, 325 to 345, and 353 to 373; these read QIML…YGFT, IFML…SIFL, LFHP…LLEY, ILFL…LLFI, WMVM…FLES, and ISFV…LYVL. Topologically, residues 374–962 are cytoplasmic; that stretch reads EKFRKESFIA…KYVIINNVVE (589 aa). The region spanning 438–661 is the Guanylate cyclase 1 domain; it reads SILCFDIVQF…DTIARSHTLE (224 aa). Asp443, Ile444, and Asp488 together coordinate Mg(2+). Disordered regions lie at residues 502–590, 751–799, and 828–876; these read AKKQ…EEIE, KSNN…VLGE, and NDIV…EEDF. 3 stretches are compositionally biased toward low complexity: residues 505–526, 535–581, and 752–795; these read QMPN…VNNI, NNNN…NNSG, and SNNN…SSSS. The segment covering 828 to 846 has biased composition (polar residues); it reads NDIVSPSLTSNSPILDTTV. Low complexity predominate over residues 847 to 871; sequence NNNNNNNNTNNNNKNQNNIYGNNNN. Transmembrane regions (helical) follow at residues 963–979, 992–1012, 1018–1038, 1071–1091, and 1105–1125; these read TKFF…MFYL, SNVI…LSFT, PLVY…CTVL, LSVL…SILI, and IGFV…KLAM. Residues 1189 to 1311 form the Guanylate cyclase 2 domain; the sequence is SIMFIQIAGF…DTANTASRMQ (123 aa). The helical transmembrane segment at 1378-1398 threads the bilayer; sequence ATPAGIASPLSGTLLGEIGSF. Topologically, residues 1399 to 1407 are cytoplasmic; that stretch reads TTPRFHLSS.

Belongs to the adenylyl cyclase class-4/guanylyl cyclase family. It depends on Mg(2+) as a cofactor. In terms of tissue distribution, expressed throughout the structure in the tipped mound and finger. Expressed primarily in the prestalk region of the slug. In the early culminant expression is increased in the posterior prespore and anterior-most regions and expands into the developing stalk. In the mid and late culminant it is expressed throughout the stalk.

Its subcellular location is the membrane. It localises to the cell projection. The protein localises to the uropodium. The enzyme catalyses ATP = 3',5'-cyclic AMP + diphosphate. With respect to regulation, regulated by cyclic AMP receptor 1 through a guanine nucleotide binding protein and protein CRAC. Both positively and negatively regulated by extracellular cAMP; this regulation is part of the mechanism that establishes the oscillatory cAMP waves during aggregation. Its function is as follows. Coordinates cell aggregation by synthesizing the cAMP that influences differentiation and morphogenesis of cells within a developing multicellular structure. This Dictyostelium discoideum (Social amoeba) protein is Adenylate cyclase, aggregation specific (acaA).